Consider the following 138-residue polypeptide: Acidic phospholipase A2 inhibitor vaspin A chain (138 aa).

An N-terminal signal peptide occupies residues 1–16 (MRTLWIVAVCLIGVEG). 7 disulfides stabilise this stretch: cysteine 42–cysteine 131, cysteine 44–cysteine 60, cysteine 59–cysteine 111, cysteine 65–cysteine 138, cysteine 66–cysteine 104, cysteine 73–cysteine 97, and cysteine 91–cysteine 102.

Belongs to the phospholipase A2 family. Group II subfamily. D49 sub-subfamily. In terms of assembly, heterodimer of a toxic basic protein having phospholipase A2 activity (B chain (AC Q8JFG0)) and a non-toxic acidic protein functioning as its inhibitor (A chain). Expressed by the venom gland.

The protein localises to the secreted. Its function is as follows. Heterodimer: postsynaptic neurotoxin. Functionally, monomer: the acidic chain inhibits the basic phospholipase A2 of the complex. The protein is Acidic phospholipase A2 inhibitor vaspin A chain of Vipera aspis aspis (Aspic viper).